We begin with the raw amino-acid sequence, 439 residues long: uncharacterized protein (439 aa).

Positions 65-208 (TRPKRVFVLV…VYAFELTTEG (144 aa)) constitute a DAGKc domain.

This is an uncharacterized protein from Caenorhabditis elegans.